The primary structure comprises 301 residues: RNA polymerase II holoenzyme cyclin-like subunit (301 aa).

In terms of domain architecture, Cyclin N-terminal spans 53–142 (QQLIKLGKRT…LGECEFALIS (90 aa)).

This sequence belongs to the cyclin family. Cyclin C subfamily. As to quaternary structure, component of the srb8-11 complex, a regulatory module of the Mediator complex.

Its subcellular location is the nucleus. Component of the srb8-11 complex. The srb8-11 complex is a regulatory module of the Mediator complex which is itself involved in regulation of basal and activated RNA polymerase II-dependent transcription. The srb8-11 complex may be involved in the transcriptional repression of a subset of genes regulated by Mediator. It may inhibit the association of the Mediator complex with RNA polymerase II to form the holoenzyme complex. The srb8-11 complex phosphorylates the C-terminal domain (CTD) of the largest subunit of RNA polymerase II. This chain is RNA polymerase II holoenzyme cyclin-like subunit (ssn8), found in Aspergillus terreus (strain NIH 2624 / FGSC A1156).